The sequence spans 365 residues: tRNA/tmRNA (uracil-C(5))-methyltransferase (365 aa).

5 residues coordinate S-adenosyl-L-methionine: Gln-189, Tyr-217, Asn-222, Glu-238, and Asp-298. Residue Cys-323 is the Nucleophile of the active site. Glu-357 functions as the Proton acceptor in the catalytic mechanism.

Belongs to the class I-like SAM-binding methyltransferase superfamily. RNA M5U methyltransferase family. TrmA subfamily.

It carries out the reaction uridine(54) in tRNA + S-adenosyl-L-methionine = 5-methyluridine(54) in tRNA + S-adenosyl-L-homocysteine + H(+). It catalyses the reaction uridine(341) in tmRNA + S-adenosyl-L-methionine = 5-methyluridine(341) in tmRNA + S-adenosyl-L-homocysteine + H(+). Its function is as follows. Dual-specificity methyltransferase that catalyzes the formation of 5-methyluridine at position 54 (m5U54) in all tRNAs, and that of position 341 (m5U341) in tmRNA (transfer-mRNA). The polypeptide is tRNA/tmRNA (uracil-C(5))-methyltransferase (Pseudoalteromonas atlantica (strain T6c / ATCC BAA-1087)).